The primary structure comprises 592 residues: Ichor (592 aa).

The segment covering 114–123 (NNNYMQSAYH) has biased composition (polar residues). Disordered regions lie at residues 114 to 156 (NNNY…VSSS), 343 to 377 (LQNR…QAPT), 416 to 439 (LSNP…MQAS), and 459 to 527 (HTTT…DLSG). Residues 124-148 (PQNQSNPTSTTQSNGGSNSNSNNSN) show a composition bias toward low complexity. Residues 356 to 369 (SSGGGGGANQGAGI) show a composition bias toward gly residues. Positions 459 to 469 (HTTTASTTGSE) are enriched in polar residues. Over residues 488 to 500 (QQQQQQQQQQQQQ) the composition is skewed to low complexity. Polar residues predominate over residues 507 to 524 (PTTPQMSAISPSGFSASD). 2 consecutive C2H2-type zinc fingers follow at residues 536–558 (HRCS…LRTH) and 564–586 (FRCD…QQIH).

The protein localises to the nucleus. Transcriptional activator. In tracheal terminal cells, regulates the transcription of factors involved in the formation of a mature apical extracellular matrix (aECM) which is essential for the integrity and shape of seamless tubes. This Drosophila melanogaster (Fruit fly) protein is Ichor.